Reading from the N-terminus, the 279-residue chain is 3-methyl-2-oxobutanoate hydroxymethyltransferase (279 aa).

Aspartate 43 and aspartate 82 together coordinate Mg(2+). 3-methyl-2-oxobutanoate-binding positions include 43-44 (DS), aspartate 82, and lysine 112. Residue glutamate 114 coordinates Mg(2+). Catalysis depends on glutamate 181, which acts as the Proton acceptor.

This sequence belongs to the PanB family. In terms of assembly, homodecamer; pentamer of dimers. It depends on Mg(2+) as a cofactor.

The protein resides in the cytoplasm. The catalysed reaction is 3-methyl-2-oxobutanoate + (6R)-5,10-methylene-5,6,7,8-tetrahydrofolate + H2O = 2-dehydropantoate + (6S)-5,6,7,8-tetrahydrofolate. It functions in the pathway cofactor biosynthesis; (R)-pantothenate biosynthesis; (R)-pantoate from 3-methyl-2-oxobutanoate: step 1/2. Functionally, catalyzes the reversible reaction in which hydroxymethyl group from 5,10-methylenetetrahydrofolate is transferred onto alpha-ketoisovalerate to form ketopantoate. The polypeptide is 3-methyl-2-oxobutanoate hydroxymethyltransferase (Geobacillus thermodenitrificans (strain NG80-2)).